A 344-amino-acid polypeptide reads, in one-letter code: Dihydroorotase (344 aa).

Zn(2+) is bound by residues His-13 and His-15. Substrate contacts are provided by residues 15-17 (HLR) and Asn-41. The Zn(2+) site is built by Lys-99, His-136, and His-174. At Lys-99 the chain carries N6-carboxylysine. His-136 contacts substrate. Leu-219 is a substrate binding site. Residue Asp-247 participates in Zn(2+) binding. Residue Asp-247 is part of the active site. Substrate-binding residues include His-251 and Ala-263.

It belongs to the metallo-dependent hydrolases superfamily. DHOase family. Class II DHOase subfamily. Homodimer. Zn(2+) serves as cofactor.

The catalysed reaction is (S)-dihydroorotate + H2O = N-carbamoyl-L-aspartate + H(+). The protein operates within pyrimidine metabolism; UMP biosynthesis via de novo pathway; (S)-dihydroorotate from bicarbonate: step 3/3. In terms of biological role, catalyzes the reversible cyclization of carbamoyl aspartate to dihydroorotate. The chain is Dihydroorotase from Acinetobacter baumannii (strain AB307-0294).